Here is a 488-residue protein sequence, read N- to C-terminus: MYKSIFKTTGRLGKTVSSRNFVTTLPKPLATSSSPATNAPNKTSNPKTGELHVSTPVDTAKISIEPPEGSSISLKSASRDASLFGTRPIYLDVQATTPVDPRVLDKMLEFYTGLYGNPHSSTHAYGWETDKEVEKARTYIADVINADPKEIIFTSGATETNNMAIKGVPRFYKKTKKHIITTQTEHKCVLDSARHMQDEGFEVTYLPVSSEGLINLDDLKKAIRKDTVLVSIMAVNNEIGVIQPLKEIGKICRENKVFFHTDAAQAYGKIPIDVNEMNIDLLSISSHKIYGPKGIGACYVRRRPRVRLDPIITGGGQERGLRSGTLAPPLVAGFGEAARLMKQESSFDKRHIEKLSSKLKNGLLSIPSTQFNGCNDAKSQYPGCVNVSFAYIEGESLLMALKDIALSSGSACTSASLEPSYVLHALGADDALAHSSIRFGIGRFTTEAEVDYVIQAINERVDFLRKMSPLWEMVQEGIDLNTIEWSGH.

The tract at residues 25–52 (LPKPLATSSSPATNAPNKTSNPKTGELH) is disordered. Residues 30 to 47 (ATSSSPATNAPNKTSNPK) show a composition bias toward polar residues. Pyridoxal 5'-phosphate-binding positions include 157–158 (AT), Asn237, Gln265, and 285–287 (SSH). Position 288 is an N6-(pyridoxal phosphate)lysine (Lys288). Thr325 serves as a coordination point for pyridoxal 5'-phosphate. Cys412 serves as the catalytic Cysteine persulfide intermediate. [2Fe-2S] cluster is bound at residue Cys412.

Belongs to the class-V pyridoxal-phosphate-dependent aminotransferase family. NifS/IscS subfamily. The cofactor is pyridoxal 5'-phosphate.

It is found in the mitochondrion. The catalysed reaction is (sulfur carrier)-H + L-cysteine = (sulfur carrier)-SH + L-alanine. Catalyzes the removal of elemental sulfur from cysteine to produce alanine. It supplies the inorganic sulfur for iron-sulfur (Fe-S) clusters. Plays a role in both tRNA-processing and mitochondrial metabolism. Involved in the 2-thio-modification of both 5-carboxymethylaminomethyl-2-thiouridine in mitochondrial tRNAs and 5-methoxycarbonylmethyl-2-thiouridine (mcm5s2U) in cytoplasmic tRNAs. This is Cysteine desulfurase, mitochondrial (NFS1) from Candida albicans (strain SC5314 / ATCC MYA-2876) (Yeast).